A 257-amino-acid chain; its full sequence is uncharacterized protein (257 aa).

Residue serine 127 is modified to Phosphoserine. 2 disordered regions span residues histidine 146–glycine 174 and alanine 210–lysine 231. Residues proline 151–serine 160 are compositionally biased toward polar residues. The stretch at histidine 196–threonine 257 forms a coiled coil.

This is an uncharacterized protein from Arabidopsis thaliana (Mouse-ear cress).